The primary structure comprises 257 residues: Transmembrane protein C257L (257 aa).

2 helical membrane-spanning segments follow: residues 123-143 (LELL…FTAL) and 163-183 (MMIF…YVLV).

Belongs to the asfivirus C257R family.

The protein localises to the host membrane. Its subcellular location is the virion. The polypeptide is Transmembrane protein C257L (African swine fever virus (strain Badajoz 1971 Vero-adapted) (Ba71V)).